The chain runs to 139 residues: Gastrula zinc finger protein XlCGF29.1 (139 aa).

5 C2H2-type zinc fingers span residues 6-28 (FTCT…LLIH), 34-56 (FDST…LSTH), 62-84 (FVCT…LHSH), 90-112 (FPCS…LRHH), and 117-139 (FPCT…QMIH).

Belongs to the krueppel C2H2-type zinc-finger protein family.

Its subcellular location is the nucleus. May be involved in transcriptional regulation. The polypeptide is Gastrula zinc finger protein XlCGF29.1 (Xenopus laevis (African clawed frog)).